The sequence spans 547 residues: MFS-type transporter ungB (547 aa).

The next 14 membrane-spanning stretches (helical) occupy residues 14 to 34, 50 to 70, 80 to 100, 111 to 131, 138 to 158, 169 to 189, 210 to 230, 238 to 258, 279 to 299, 316 to 336, 343 to 363, 366 to 386, 392 to 412, and 475 to 495; these read LLVT…ETVL, DVGW…MAWG, WVFL…GVSP, IAGL…SNTI, IYLG…PVIG, WCFF…VFCL, LLGS…LEWG, SWRV…FAVV, LGLI…VYYL, LAIL…GILV, TPFL…LSSL, ASGL…IGLG, VVPS…TLCF, and AVSE…LGSA. Positions 503 to 547 are disordered; it reads PGHKEATEKVEGEGQGQGQQQEQDQGQGWGEVGESHALAHPTADK. The span at 504 to 514 shows a compositional bias: basic and acidic residues; that stretch reads GHKEATEKVEG.

Belongs to the major facilitator superfamily. TCR/Tet family.

The protein localises to the membrane. Its function is as follows. MFS-type transporter; part of the gene cluster that mediates the biosynthesis of the unguisins, gamma-aminobutyric acid (GABA)-containing fungal cyclic heptapeptides with the amino acid sequence cyclo-(D-Ala1-D-Val2-L-Phe3-D-Val4-D-Ala5-D-Trp6-GABA7) for unguisin A and cyclo-(D-Ala1-D-Val2-L-Leu3-D-Val4-D-Ala5-D-Trp6-GABA7) for unguisin B. May be involved in the secretion of unguisins. The polypeptide is MFS-type transporter ungB (Aspergillus violaceofuscus (strain CBS 115571)).